Reading from the N-terminus, the 560-residue chain is Calnexin homolog (560 aa).

The N-terminal stretch at 1–22 (MKYGKVSFLALLCSLYVRGSLA) is a signal peptide. The Lumenal portion of the chain corresponds to 23–489 (DPESEQEPLV…ETIIETPEIG (467 aa)). Cysteines 132 and 163 form a disulfide. Positions 136, 138, 154, and 161 each coordinate an alpha-D-glucoside. Residues 242–375 (IYDPEDIKPA…RKIPNPDYFD (134 aa)) form a p domain (Extended arm) region. Tandem repeats lie at residues 244–255 (DPEDIKPADWVD), 261–272 (DPNAVKPDDWDE), 280–291 (DPDAVKPEDWLE), 299–310 (DPEAQKPEDWDD), and 314–324 (GDWIPSEIINP). 4 X approximate repeats regions lie at residues 244-310 (DPED…DWDD) and 314-371 (GDWI…IPNP). A disordered region spans residues 253-273 (WVDEPEIPDPNAVKPDDWDED). A disulfide bridge connects residues Cys326 and Cys332. 3 consecutive repeat copies span residues 333-343 (GEWKPPMIRNP), 347-357 (GPWSPPMIPNP), and 361-371 (GEWYPRKIPNP). Glu391 contributes to the an alpha-D-glucoside binding site. Asn418 carries N-linked (GlcNAc...) asparagine glycosylation. The chain crosses the membrane as a helical span at residues 490 to 512 (IAIVAVLGSLTAVILTCYFYFFA). The Cytoplasmic portion of the chain corresponds to 513 to 560 (SSSPASLSTGTTEAEKEQQEKFKQETETEKIDVSYAPETESPTAKNED). A disordered region spans residues 517 to 560 (ASLSTGTTEAEKEQQEKFKQETETEKIDVSYAPETESPTAKNED). Positions 525 to 544 (EAEKEQQEKFKQETETEKID) are enriched in basic and acidic residues. Residue Thr551 is modified to Phosphothreonine. The residue at position 553 (Ser553) is a Phosphoserine. A Phosphothreonine modification is found at Thr555.

It belongs to the calreticulin family.

The protein resides in the endoplasmic reticulum membrane. Calcium-binding protein that interacts with newly synthesized monoglucosylated glycoproteins in the endoplasmic reticulum. It may act in assisting protein assembly and/or in the retention within the ER of unassembled protein subunits. It seems to play a major role in the quality control apparatus of the ER by the retention of incorrectly folded proteins. This Schizosaccharomyces pombe (strain 972 / ATCC 24843) (Fission yeast) protein is Calnexin homolog (cal1).